The primary structure comprises 216 residues: uncharacterized protein (216 aa).

This is an uncharacterized protein from Acanthamoeba polyphaga mimivirus (APMV).